The primary structure comprises 156 residues: Ribosomal RNA large subunit methyltransferase H (156 aa).

S-adenosyl-L-methionine is bound by residues leucine 73, glycine 104, and leucine 123 to leucine 128.

Belongs to the RNA methyltransferase RlmH family. As to quaternary structure, homodimer.

The protein localises to the cytoplasm. The enzyme catalyses pseudouridine(1915) in 23S rRNA + S-adenosyl-L-methionine = N(3)-methylpseudouridine(1915) in 23S rRNA + S-adenosyl-L-homocysteine + H(+). Functionally, specifically methylates the pseudouridine at position 1915 (m3Psi1915) in 23S rRNA. This Photobacterium profundum (strain SS9) protein is Ribosomal RNA large subunit methyltransferase H.